The sequence spans 506 residues: Protein EFFECTOR OF TRANSCRIPTION 1 (506 aa).

A GIY-YIG domain is found at 185–225 (AFQGLYELSHDHGRKDDVLVANLGQPESIRSRLRSYSRSFA). The span at 234–247 (LSQTILPTTQNKSD) shows a compositional bias: polar residues. The interval 234–298 (LSQTILPTTQ…VSEKHDDIVD (65 aa)) is disordered. A compositionally biased stretch (basic and acidic residues) spans 248–272 (NQTEEKKSDSEEEREVSSDAAEKES). Residues 273–288 (NSLPSILRLSRSRPQP) show a composition bias toward low complexity. 2 Cx9Cx9RCx2HK repeats span residues 306–331 (CGVL…TEHK) and 361–386 (CGVI…EDHK). Positions 404 to 413 (KAVNEDKSKP) are enriched in basic and acidic residues. The interval 404–426 (KAVNEDKSKPETSTGMNQEGSGL) is disordered. The span at 414–423 (ETSTGMNQEG) shows a compositional bias: polar residues. Cx9Cx9RCx2HK repeat units follow at residues 428 to 453 (CEAT…WQHK) and 475 to 500 (CGFK…EEHK).

In terms of tissue distribution, expressed in rosette leaves, stipules, stems, flowers, siliques and mature seeds. Expressed in the vascular bundles of xylem in shoot parenchyma cells. Expressed in the remnant cytoplasm of differentiated fiber cells and in protoxylem element of parenchymal cells.

The protein resides in the cytoplasm. Its subcellular location is the nucleus. Its function is as follows. Transcriptional regulator involved in the regulation of cell differentiation in meristems. Binds DNA without sequence preference. In Arabidopsis thaliana (Mouse-ear cress), this protein is Protein EFFECTOR OF TRANSCRIPTION 1.